Reading from the N-terminus, the 236-residue chain is Orotidine 5'-phosphate decarboxylase (236 aa).

Residues D17, K39, 66–75, T125, R186, Q195, G215, and R216 contribute to the substrate site; that span reads DLKFHDIPNT. K68 serves as the catalytic Proton donor.

The protein belongs to the OMP decarboxylase family. Type 1 subfamily. In terms of assembly, homodimer.

It carries out the reaction orotidine 5'-phosphate + H(+) = UMP + CO2. It participates in pyrimidine metabolism; UMP biosynthesis via de novo pathway; UMP from orotate: step 2/2. Catalyzes the decarboxylation of orotidine 5'-monophosphate (OMP) to uridine 5'-monophosphate (UMP). The protein is Orotidine 5'-phosphate decarboxylase of Buchnera aphidicola subsp. Schizaphis graminum (strain Sg).